The sequence spans 465 residues: Asparagine--tRNA ligase (465 aa).

The protein belongs to the class-II aminoacyl-tRNA synthetase family. Homodimer.

It is found in the cytoplasm. It carries out the reaction tRNA(Asn) + L-asparagine + ATP = L-asparaginyl-tRNA(Asn) + AMP + diphosphate + H(+). This chain is Asparagine--tRNA ligase, found in Clostridium perfringens (strain SM101 / Type A).